We begin with the raw amino-acid sequence, 426 residues long: Histidine--tRNA ligase (426 aa).

It belongs to the class-II aminoacyl-tRNA synthetase family. Homodimer.

Its subcellular location is the cytoplasm. The catalysed reaction is tRNA(His) + L-histidine + ATP = L-histidyl-tRNA(His) + AMP + diphosphate + H(+). The protein is Histidine--tRNA ligase of Shewanella baltica (strain OS223).